A 163-amino-acid chain; its full sequence is Nucleotide-binding protein EAT1b_2037 (163 aa).

It belongs to the YajQ family.

Nucleotide-binding protein. The sequence is that of Nucleotide-binding protein EAT1b_2037 from Exiguobacterium sp. (strain ATCC BAA-1283 / AT1b).